A 390-amino-acid chain; its full sequence is Succinate--CoA ligase [ADP-forming] subunit beta (390 aa).

Residues 9–244 (KEILKRYGVN…ETQTDTSENE (236 aa)) enclose the ATP-grasp domain. ATP is bound by residues Lys46, 53 to 55 (GRG), Glu99, Leu102, and Glu107. Asn199 and Asp213 together coordinate Mg(2+). Substrate contacts are provided by residues Asn264 and 321-323 (GIV).

Belongs to the succinate/malate CoA ligase beta subunit family. In terms of assembly, heterotetramer of two alpha and two beta subunits. Mg(2+) serves as cofactor.

It carries out the reaction succinate + ATP + CoA = succinyl-CoA + ADP + phosphate. The enzyme catalyses GTP + succinate + CoA = succinyl-CoA + GDP + phosphate. It functions in the pathway carbohydrate metabolism; tricarboxylic acid cycle; succinate from succinyl-CoA (ligase route): step 1/1. In terms of biological role, succinyl-CoA synthetase functions in the citric acid cycle (TCA), coupling the hydrolysis of succinyl-CoA to the synthesis of either ATP or GTP and thus represents the only step of substrate-level phosphorylation in the TCA. The beta subunit provides nucleotide specificity of the enzyme and binds the substrate succinate, while the binding sites for coenzyme A and phosphate are found in the alpha subunit. The chain is Succinate--CoA ligase [ADP-forming] subunit beta from Campylobacter curvus (strain 525.92).